Consider the following 1270-residue polypeptide: MAIIDTTKDLSALFTQQVRASPNALALEDDKTSYTYAELDKEVEELSRRLRSYGVSRDSLVGVLLPRSAHFVIACLAALRAGGAFLVLELAYPPDLLADVLEDATPAVVVTHRSETGKIKGSVPVISLDEPPVDANGHTVEPGPLPVDDDLDRLAFVSYSSGTTGKPKGIANPHRAPVLSYNLRFGVQDLQPGDRVACNVFFIWEILRPLIRGATVVAVPDDHSYDPAALVDLLASRHITETLMTPTLLATILSRHSDIGARLPELRTLWLNGEVVTTDLARRAIRALPNTRLLNCYSACETHEIACGDIKEIVSDESQYCPVGPLLDPKHAYIVNEQGEKVEEGVSGELCVGGPMLARGYINRPETTAKAFIPDPFSNSPGAVMYRTGDRARMLPSGLLEITGRVGAMIKLRGYSVVPGKVENDIVKHLAVRQCAVVAHGEGLERQLVAYIVADQEHSEERPTVEINSSGHSPGARRALTKFLAHYMIPALWVQVDELPTHEVSGKIDLKRLPPPPTEVLANGNGKKEDPIGIEDIAAIWAVALKVPKATLKPEDNFFDLGGHSLSIADLSSRLSRKFGFRIPIVRLAENSTLSGHLDTVRAIRDGHTAAVQADLPAVLRTDATLDEEIRSDAKICSLTDAKTVLLTGVTGFLGAFLLKDLVDSTSAHIICLVRFNEPEDDDQPGGVARIRRNLLDLGLWNDSIMERVEILPGNLSRSRFGLTPDAFQELAQRVDVIVHAAASVNLVYPYAALRAANVGGTREILRLASQGGATVQYVSTNGVLPPSGEKGWPEDTMLDMKDVPTKLLDGYGQTKWVAEQLVLEAGRRGLPVRVHRIGTVSGHSQSGAANAWDLLTALIVESIKLGKYPDVEGWRAEMTPVDFVSKAIIHLANQTAVEQTVFHIGDPDPVNTRSVFEDLKTLGYPTEPLSWDDWVALWTSQRGHVKGGDGGFTVDILRSGMPSIEFLRGIVVLDNSATRPIRREVERPKVDRFLLETYTRHWFARGWLKRPPIRQRQLSPIPKGPLSGKVAVVTGASSGIGAAVATALAREGAHVALGARRLDALESLKEKLSASGVKVVTCKTDVTDRKQVEGLVKAATEELGPVDILVACAGVMYFTMMANTQMDEWERTVDVNCKGILNSLASTVPGMLARGKGHVVAISSDAGRKVFPGLGVYSASKFFVEATLQALRLETAGQGLRVTAVQPGNTATDLLGMSTDAEAIKKYGEPSGAQILDPEDVANSIIYALRQPEHVAMNEILIEPRDEPI.

The tract at residues 14–418 is adenylation (A) domain; that stretch reads FTQQVRASPN…MIKLRGYSVV (405 aa). Residues 528-605 form the Carrier domain; that stretch reads KEDPIGIEDI…GHLDTVRAIR (78 aa). Residue serine 565 is modified to O-(pantetheine 4'-phosphoryl)serine. Residues 643-937 are carboxylic acid reductase domain R1; sequence KTVLLTGVTG…EPLSWDDWVA (295 aa). An aldehyde reductase domain R2 region spans residues 1026-1256; it reads PLSGKVAVVT…IYALRQPEHV (231 aa).

It belongs to the NRP synthetase family.

The tetramethylammonium ion, which mimics the head group of glycine betaine, acts as a competitive inhibitor of ATRR A domain, whereas the potency decreased by three orders of magnitude with dimethylammonium. Choline is a mixed inhibitor for both glycine betaine reductase and aldehyde reductase activity but more potent in competition against glycine betaine in the first reduction step. Therefore, choline could act as a feedback inhibitor to regulate ATRR enzymatic activity. The lowered binding affinity of choline to R2 favors the release of choline after glycine betaine aldehyde reduction to avoid direct product inhibition. NRPS-like enzyme with an unusual domain architecture that converts back glycine betaine to choline via a 2-step reduction mechanism, and thereby can be an alternative source of choline. Permits direct reutilization of endogenously stored glycine betaine for on-demand biosynthesis of choline and choline derivatives, including phospholipid phosphatidylcholine (PC) which has an essential role in maintaining membrane integrity and functionality, or choline-O-sulfate, a mean for intracellular sulfate storage. Glycine betaine is activated by the adenylation (A) domain, and transferred to the thiolation (T) domain. Movement of the phosphopantetheine arm to the thioester reductase domain R1 then allows thioester reduction by NADPH of glycine betainoyl thioester to glycine betaine aldehyde, which is in turn reduced to choline by the aldehyde reductase domain R2. This Emericella nidulans (strain FGSC A4 / ATCC 38163 / CBS 112.46 / NRRL 194 / M139) (Aspergillus nidulans) protein is Glycine betaine reductase ATRR.